The chain runs to 254 residues: 21S rRNA pseudouridine(2819) synthase (254 aa).

Asp-71 is a catalytic residue.

This sequence belongs to the pseudouridine synthase RluA family.

The protein resides in the mitochondrion. It catalyses the reaction uridine(2819) in 21S rRNA = pseudouridine(2819) in 21S rRNA. Its function is as follows. Pseudouridylate synthase responsible for the pseudouridine-2819 formation in mitochondrial 21S rRNA. May modulate the efficiency or the fidelity of the mitochondrial translation machinery. The polypeptide is 21S rRNA pseudouridine(2819) synthase (PUS5) (Saccharomyces cerevisiae (strain ATCC 204508 / S288c) (Baker's yeast)).